We begin with the raw amino-acid sequence, 333 residues long: Phosphate acyltransferase (333 aa).

Belongs to the PlsX family. As to quaternary structure, homodimer. Probably interacts with PlsY.

Its subcellular location is the cytoplasm. The enzyme catalyses a fatty acyl-[ACP] + phosphate = an acyl phosphate + holo-[ACP]. Its pathway is lipid metabolism; phospholipid metabolism. Its function is as follows. Catalyzes the reversible formation of acyl-phosphate (acyl-PO(4)) from acyl-[acyl-carrier-protein] (acyl-ACP). This enzyme utilizes acyl-ACP as fatty acyl donor, but not acyl-CoA. The protein is Phosphate acyltransferase of Lactobacillus gasseri (strain ATCC 33323 / DSM 20243 / BCRC 14619 / CIP 102991 / JCM 1131 / KCTC 3163 / NCIMB 11718 / NCTC 13722 / AM63).